A 543-amino-acid polypeptide reads, in one-letter code: T-complex protein 1 subunit eta (543 aa).

M1 bears the N-acetylmethionine mark. G41 is a binding site for ADP. Residue G41 participates in ATP binding. An N6-acetyllysine modification is found at K67. D92 is a Mg(2+) binding site. ADP-binding residues include G93, T94, T95, S96, S164, and S165. Residue G93 participates in ATP binding. S96 provides a ligand contact to ATP. Residues K250 and K320 each carry the N6-acetyllysine modification. Positions 398 and 409 each coordinate ATP. G409 is a binding site for ADP. A Glycyl lysine isopeptide (Lys-Gly) (interchain with G-Cter in SUMO2) cross-link involves residue K430. 2 residues coordinate ADP: E494 and R499. R499 contributes to the ATP binding site. The disordered stretch occupies residues 524–543 (RSTVDASPAAGRGRGRGRLH). R535 carries the post-translational modification Omega-N-methylarginine.

Belongs to the TCP-1 chaperonin family. In terms of assembly, component of the chaperonin-containing T-complex (TRiC), a hexadecamer composed of two identical back-to-back stacked rings enclosing a protein folding chamber. Each ring is made up of eight different subunits: TCP1/CCT1, CCT2, CCT3, CCT4, CCT5, CCT6A/CCT6, CCT7, CCT8. Interacts with PACRG. Interacts with DLEC1.

It is found in the cytoplasm. It carries out the reaction ATP + H2O = ADP + phosphate + H(+). Component of the chaperonin-containing T-complex (TRiC), a molecular chaperone complex that assists the folding of actin, tubulin and other proteins upon ATP hydrolysis. The TRiC complex mediates the folding of WRAP53/TCAB1, thereby regulating telomere maintenance. The polypeptide is T-complex protein 1 subunit eta (CCT7) (Bos taurus (Bovine)).